A 299-amino-acid chain; its full sequence is Mitochondrial 2-oxodicarboxylate carrier (299 aa).

Solcar repeat units follow at residues R11–L100, S107–M196, and L205–W294. The next 6 membrane-spanning stretches (helical) occupy residues I17–V37, F70–V89, A113–V133, G167–F187, L205–N225, and L277–E297.

This sequence belongs to the mitochondrial carrier (TC 2.A.29) family. In terms of tissue distribution, expressed in placenta, gall bladder and colon.

The protein localises to the mitochondrion inner membrane. It catalyses the reaction 2-oxoadipate(in) + 2-oxoglutarate(out) = 2-oxoadipate(out) + 2-oxoglutarate(in). It carries out the reaction hexanedioate(in) + 2-oxoglutarate(out) = hexanedioate(out) + 2-oxoglutarate(in). The enzyme catalyses L-2-aminoadipate(in) + 2-oxoglutarate(out) = L-2-aminoadipate(out) + 2-oxoglutarate(in). The catalysed reaction is glutarate(in) + 2-oxoglutarate(out) = glutarate(out) + 2-oxoglutarate(in). It catalyses the reaction 2-oxoheptanedioate(in) + 2-oxoglutarate(out) = 2-oxoheptanedioate(out) + 2-oxoglutarate(in). It carries out the reaction heptanedioate(in) + 2-oxoglutarate(out) = heptanedioate(out) + 2-oxoglutarate(in). The enzyme catalyses citrate(in) + 2-oxoglutarate(out) = citrate(out) + 2-oxoglutarate(in). Transports dicarboxylates across the inner membranes of mitochondria by a counter-exchange mechanism. Can transport 2-oxoadipate (2-oxohexanedioate), 2-oxoglutarate, adipate (hexanedioate), glutarate, and to a lesser extent, pimelate (heptanedioate), 2-oxopimelate (2-oxoheptanedioate), 2-aminoadipate (2-aminohexanedioate), oxaloacetate, and citrate. Plays a central role in catabolism of lysine, hydroxylysine, and tryptophan, by transporting common metabolite intermediates (such as 2-oxoadipate) into the mitochondria, where it is converted into acetyl-CoA and can enter the citric acid (TCA) cycle. This is Mitochondrial 2-oxodicarboxylate carrier (SLC25A21) from Homo sapiens (Human).